The sequence spans 114 residues: Large ribosomal subunit protein eL31 (114 aa).

It belongs to the eukaryotic ribosomal protein eL31 family.

The polypeptide is Large ribosomal subunit protein eL31 (RPL31) (Eremothecium gossypii (strain ATCC 10895 / CBS 109.51 / FGSC 9923 / NRRL Y-1056) (Yeast)).